The chain runs to 377 residues: UDP-N-acetylglucosamine--N-acetylmuramyl-(pentapeptide) pyrophosphoryl-undecaprenol N-acetylglucosamine transferase (377 aa).

UDP-N-acetyl-alpha-D-glucosamine contacts are provided by residues 11–13, Asn-123, Arg-164, Ser-194, and Gln-295; that span reads TGG.

This sequence belongs to the glycosyltransferase 28 family. MurG subfamily.

Its subcellular location is the cell inner membrane. The catalysed reaction is di-trans,octa-cis-undecaprenyl diphospho-N-acetyl-alpha-D-muramoyl-L-alanyl-D-glutamyl-meso-2,6-diaminopimeloyl-D-alanyl-D-alanine + UDP-N-acetyl-alpha-D-glucosamine = di-trans,octa-cis-undecaprenyl diphospho-[N-acetyl-alpha-D-glucosaminyl-(1-&gt;4)]-N-acetyl-alpha-D-muramoyl-L-alanyl-D-glutamyl-meso-2,6-diaminopimeloyl-D-alanyl-D-alanine + UDP + H(+). The protein operates within cell wall biogenesis; peptidoglycan biosynthesis. Cell wall formation. Catalyzes the transfer of a GlcNAc subunit on undecaprenyl-pyrophosphoryl-MurNAc-pentapeptide (lipid intermediate I) to form undecaprenyl-pyrophosphoryl-MurNAc-(pentapeptide)GlcNAc (lipid intermediate II). The chain is UDP-N-acetylglucosamine--N-acetylmuramyl-(pentapeptide) pyrophosphoryl-undecaprenol N-acetylglucosamine transferase from Opitutus terrae (strain DSM 11246 / JCM 15787 / PB90-1).